A 116-amino-acid chain; its full sequence is Photosystem II assembly factor Psb28 protein (116 aa).

Belongs to the Psb28 family. In terms of assembly, part of a photosystem II (PSII) assembly intermediate complex PSII-I; crystallized from a strain deleted of psbJ, it forms monomeric PSII before addition of the oxygen evolving complex. PSII-I includes 3 assembly factors not found in mature PSII (Psb27, Psb28 and Psb34). This protein binds to the cytoplasmic face of D1 and D2 (psbA and psbD), contacting CP47 (psbB) directly above the quinone b-binding site.

Its subcellular location is the cellular thylakoid membrane. Functionally, a photosystem II (PSII) assembly factor that binds PSII during biogenesis, protecting the complex until water splitting is activated. The protein is Photosystem II assembly factor Psb28 protein of Thermosynechococcus vestitus (strain NIES-2133 / IAM M-273 / BP-1).